We begin with the raw amino-acid sequence, 210 residues long: Na(+)-translocating NADH-quinone reductase subunit D (210 aa).

6 helical membrane passes run 14–34 (PIVS…ALAV), 42–62 (LVMT…ISIL), 72–92 (IIVQ…VLQA), 103–123 (VFVG…AYAM), 131–151 (FMDG…VGFI), and 178–198 (NGLL…IWII).

This sequence belongs to the NqrDE/RnfAE family. Composed of six subunits; NqrA, NqrB, NqrC, NqrD, NqrE and NqrF.

It localises to the cell inner membrane. The catalysed reaction is a ubiquinone + n Na(+)(in) + NADH + H(+) = a ubiquinol + n Na(+)(out) + NAD(+). Its function is as follows. NQR complex catalyzes the reduction of ubiquinone-1 to ubiquinol by two successive reactions, coupled with the transport of Na(+) ions from the cytoplasm to the periplasm. NqrA to NqrE are probably involved in the second step, the conversion of ubisemiquinone to ubiquinol. This Shewanella halifaxensis (strain HAW-EB4) protein is Na(+)-translocating NADH-quinone reductase subunit D.